The sequence spans 846 residues: Envelope glycoprotein gp160 (846 aa).

The signal sequence occupies residues 1–31 (MRAREKERNCQNLWKWGIMLLGMLMTCSAAE). At 32 to 674 (DLWVTVYYGV…ITKWLWYIKL (643 aa)) the chain is on the extracellular side. The cysteines at positions 53 and 73 are disulfide-linked. N-linked (GlcNAc...) asparagine; by host glycosylation is found at N87, N129, N151, N179, N182, N229, N236, N257, N271, N284, and N290. Disulfide bonds link C118-C200, C125-C191, C130-C152, C213-C242, and C223-C234. The interval 130 to 151 (CTDELRNSKGNGKVEEEEKRKN) is V1. Residues 152-191 (CSFNVRDKREQVYALFYKLDIVPIDNNNRTNSTNYRLINC) form a V2 region. The segment at 291–327 (CTRPYKYTRQRTSIGLRQSLYTITGKKKKTGYIGQAH) is V3. An intrachain disulfide couples C291 to C328. N351 is a glycosylation site (N-linked (GlcNAc...) asparagine; by host). The tract at residues 360 to 370 (SSGGDPEITSH) is CD4-binding loop. Intrachain disulfides connect C374–C435 and C381–C408. The V4 stretch occupies residues 381–408 (CNTSRLFNSTWNQTNSTGFNNGTVTLPC). N382, N388, N392, N395, N401, N438, N451, and N452 each carry an N-linked (GlcNAc...) asparagine; by host glycan. V5 regions lie at residues 450 to 461 (ANNSSHETIRPG) and 453 to 461 (SSHETIRPG). Positions 502 to 522 (AIGLGAVFLGFLGAAGSTMGA) are fusion peptide. The tract at residues 564–582 (KQLQARVLAVERYLRDQQL) is immunosuppression. Cysteines 588 and 594 form a disulfide. N-linked (GlcNAc...) asparagine; by host glycans are attached at residues N601, N606, N615, and N627. Residues 623-657 (REIDNYTGLIYSLIEESQIQQEKNEKELLELDKWA) adopt a coiled-coil conformation. The interval 652 to 673 (ELDKWASLWNWFSITKWLWYIK) is MPER; binding to GalCer. A helical transmembrane segment spans residues 675–695 (FIMIVGGLIGLRIVFAVLSVV). The Cytoplasmic portion of the chain corresponds to 696–846 (NRVRQGYSPL…IRQGLERLLL (151 aa)). The YXXL motif; contains endocytosis signal signature appears at 702 to 705 (YSPL). 2 S-palmitoyl cysteine; by host lipidation sites follow: C754 and C827. The Di-leucine internalization motif motif lies at 845-846 (LL).

Belongs to the HIV-1 env protein family. As to quaternary structure, the mature envelope protein (Env) consists of a homotrimer of non-covalently associated gp120-gp41 heterodimers. The resulting complex protrudes from the virus surface as a spike. There seems to be as few as 10 spikes on the average virion. Interacts with host CD4, CCR5 and CXCR4. Gp120 also interacts with the C-type lectins CD209/DC-SIGN and CLEC4M/DC-SIGNR (collectively referred to as DC-SIGN(R)). Gp120 and gp41 interact with GalCer. Gp120 interacts with host ITGA4/ITGB7 complex; on CD4+ T-cells, this interaction results in rapid activation of integrin ITGAL/LFA-1, which facilitates efficient cell-to-cell spreading of HIV-1. Gp120 interacts with cell-associated heparan sulfate; this interaction increases virus infectivity on permissive cells and may be involved in infection of CD4- cells. In terms of assembly, the mature envelope protein (Env) consists of a homotrimer of non-covalently associated gp120-gp41 heterodimers. The resulting complex protrudes from the virus surface as a spike. There seems to be as few as 10 spikes on the average virion. Highly glycosylated by host. The high number of glycan on the protein is reffered to as 'glycan shield' because it contributes to hide protein sequence from adaptive immune system. Post-translationally, palmitoylation of the transmembrane protein and of Env polyprotein (prior to its proteolytic cleavage) is essential for their association with host cell membrane lipid rafts. Palmitoylation is therefore required for envelope trafficking to classical lipid rafts, but not for viral replication. In terms of processing, specific enzymatic cleavages in vivo yield mature proteins. Envelope glycoproteins are synthesized as an inactive precursor that is heavily N-glycosylated and processed likely by host cell furin in the Golgi to yield the mature SU and TM proteins. The cleavage site between SU and TM requires the minimal sequence [KR]-X-[KR]-R. About 2 of the 9 disulfide bonds of gp41 are reduced by P4HB/PDI, following binding to CD4 receptor.

Its subcellular location is the virion membrane. The protein resides in the host cell membrane. The protein localises to the host endosome membrane. In terms of biological role, oligomerizes in the host endoplasmic reticulum into predominantly trimers. In a second time, gp160 transits in the host Golgi, where glycosylation is completed. The precursor is then proteolytically cleaved in the trans-Golgi and thereby activated by cellular furin or furin-like proteases to produce gp120 and gp41. Its function is as follows. Attaches the virus to the host lymphoid cell by binding to the primary receptor CD4. This interaction induces a structural rearrangement creating a high affinity binding site for a chemokine coreceptor like CXCR4 and/or CCR5. Acts as a ligand for CD209/DC-SIGN and CLEC4M/DC-SIGNR, which are respectively found on dendritic cells (DCs), and on endothelial cells of liver sinusoids and lymph node sinuses. These interactions allow capture of viral particles at mucosal surfaces by these cells and subsequent transmission to permissive cells. HIV subverts the migration properties of dendritic cells to gain access to CD4+ T-cells in lymph nodes. Virus transmission to permissive T-cells occurs either in trans (without DCs infection, through viral capture and transmission), or in cis (following DCs productive infection, through the usual CD4-gp120 interaction), thereby inducing a robust infection. In trans infection, bound virions remain infectious over days and it is proposed that they are not degraded, but protected in non-lysosomal acidic organelles within the DCs close to the cell membrane thus contributing to the viral infectious potential during DCs' migration from the periphery to the lymphoid tissues. On arrival at lymphoid tissues, intact virions recycle back to DCs' cell surface allowing virus transmission to CD4+ T-cells. Functionally, acts as a class I viral fusion protein. Under the current model, the protein has at least 3 conformational states: pre-fusion native state, pre-hairpin intermediate state, and post-fusion hairpin state. During fusion of viral and target intracellular membranes, the coiled coil regions (heptad repeats) assume a trimer-of-hairpins structure, positioning the fusion peptide in close proximity to the C-terminal region of the ectodomain. The formation of this structure appears to drive apposition and subsequent fusion of viral and target cell membranes. Complete fusion occurs in host cell endosomes and is dynamin-dependent, however some lipid transfer might occur at the plasma membrane. The virus undergoes clathrin-dependent internalization long before endosomal fusion, thus minimizing the surface exposure of conserved viral epitopes during fusion and reducing the efficacy of inhibitors targeting these epitopes. Membranes fusion leads to delivery of the nucleocapsid into the cytoplasm. This Human immunodeficiency virus type 1 group M subtype D (isolate NDK) (HIV-1) protein is Envelope glycoprotein gp160.